Here is a 166-residue protein sequence, read N- to C-terminus: Large ribosomal subunit protein uL10 (166 aa).

It belongs to the universal ribosomal protein uL10 family. Part of the ribosomal stalk of the 50S ribosomal subunit. The N-terminus interacts with L11 and the large rRNA to form the base of the stalk. The C-terminus forms an elongated spine to which L12 dimers bind in a sequential fashion forming a multimeric L10(L12)X complex.

In terms of biological role, forms part of the ribosomal stalk, playing a central role in the interaction of the ribosome with GTP-bound translation factors. The sequence is that of Large ribosomal subunit protein uL10 from Pseudomonas paraeruginosa (strain DSM 24068 / PA7) (Pseudomonas aeruginosa (strain PA7)).